Reading from the N-terminus, the 226-residue chain is Fibrillarin-like rRNA/tRNA 2'-O-methyltransferase (226 aa).

S-adenosyl-L-methionine is bound by residues 85–86 (TT), 104–105 (EF), 129–130 (DA), and 149–152 (DVAQ).

This sequence belongs to the methyltransferase superfamily. Fibrillarin family. In terms of assembly, interacts with nop5. Component of box C/D small ribonucleoprotein (sRNP) particles that contain rpl7ae, FlpA and nop5, plus a guide RNA.

In terms of biological role, involved in pre-rRNA and tRNA processing. Utilizes the methyl donor S-adenosyl-L-methionine to catalyze the site-specific 2'-hydroxyl methylation of ribose moieties in rRNA and tRNA. Site specificity is provided by a guide RNA that base pairs with the substrate. Methylation occurs at a characteristic distance from the sequence involved in base pairing with the guide RNA. This is Fibrillarin-like rRNA/tRNA 2'-O-methyltransferase from Thermococcus sibiricus (strain DSM 12597 / MM 739).